Reading from the N-terminus, the 338-residue chain is Anthocyanidin reductase ((2S)-flavan-3-ol-forming) (338 aa).

NADP(+)-binding positions include 18–21 (TGFV), K48, 87–90 (VATP), and Y168.

It belongs to the NAD(P)-dependent epimerase/dehydratase family. Dihydroflavonol-4-reductase subfamily.

The enzyme catalyses a (2S,3R)-flavan-3-ol + 2 NADP(+) = an anthocyanidin with a 3-hydroxy group + 2 NADPH + 2 H(+). The catalysed reaction is a (2S,3S)-flavan-3-ol + 2 NADP(+) = an anthocyanidin with a 3-hydroxy group + 2 NADPH + 2 H(+). Its pathway is secondary metabolite biosynthesis; flavonoid biosynthesis. In terms of biological role, produces the terminal flavan-3-ol monomers required for the formation of proanthocyanidins or condensed tannins in leaves and flowers, as well as in the skin and seeds of developing berries. Behaves as a reductase and as a C-3 epimerase. Catalyzes the double reduction of anthocyanidins, producing a mixture of (2S,3S)- and (2S,3R)-flavan-3-ols. The enzyme catalyzes sequential hydride transfers to C-2 and C-4, respectively and epimerization at C-3 is achieved by tautomerization that occurs between the two hydride transfers. Converts cyanidin, pelargonidin and delphinidin into catechin and epicatechin, afzelechin and epiafzelechin, and gallocatechin and epigallocatechin respectively. The polypeptide is Anthocyanidin reductase ((2S)-flavan-3-ol-forming) (Vitis vinifera (Grape)).